The primary structure comprises 466 residues: MPRTLTASDMVTPGSLSPPPTESTEGEQAGQPLLDGAPSSASLDTLIQHLVPTADYYPEKAYIFTFLLSSRLFIEPRELLARVCHLCIEQQQLDKPVLDKARVRKFGAKLLQLLAEWTETFPRDFEEESTIGHLTDVVGRISPCDETYGSRVHQLLQTLHQKLASLGQGPESLVGADKPISYRTKPPASIHRELLGVCSDPYTLAQQLTHVELERLRHIGPEEFVQAFVNKDPLAGTKPRFSDKTNNVEAYVKWFNRLCYLVATEICMPAKKKQRAQVIEFFIDVARECFNIGNFNSLMAIISGMNMSPVSRLKKTWAKVKTAKFFILEHQMDPTGNFCNYRTALRGAAHRSLTAHSSREKIVIPFFSLLIKDIYFLNEGCANRLPNGHVNFEKFLELAKQVGEFITWKQVECPFEQDPSITHYLYTAPIFSEDGLYLASYESESPESQTEKERWKSLRSSILGKT.

Disordered regions lie at residues 1–35 (MPRTLTASDMVTPGSLSPPPTESTEGEQAGQPLLD) and 443–466 (SESPESQTEKERWKSLRSSILGKT). The N-terminal Ras-GEF domain occupies 34–164 (LDGAPSSASL…LLQTLHQKLA (131 aa)). Positions 200-446 (DPYTLAQQLT…YLASYESESP (247 aa)) constitute a Ras-GEF domain.

In terms of biological role, guanine nucleotide exchange factor (GEF). In Mus musculus (Mouse), this protein is Ras-GEF domain-containing family member 1C (Rasgef1c).